The primary structure comprises 160 residues: MFGMGFFEILVVLIVAIIFLGPEKFPQAVVDIVKFFRAVKKTLNDAKDTLDKEINIEEIKKETLEYQKLFENKVESLKGVKIEELEDAKVTAENEIKSIQDLMQDYKRSLETNTIPNHLNEEVSNEEALNKEVSSDESPKEVQLTTDNNAKEHDKEKEHV.

The chain crosses the membrane as a helical span at residues 1 to 21 (MFGMGFFEILVVLIVAIIFLG). The disordered stretch occupies residues 118–160 (HLNEEVSNEEALNKEVSSDESPKEVQLTTDNNAKEHDKEKEHV). 2 stretches are compositionally biased toward basic and acidic residues: residues 128 to 140 (ALNK…ESPK) and 149 to 160 (NAKEHDKEKEHV).

The protein belongs to the TatB family. In terms of assembly, the Tat system comprises two distinct complexes: a TatABC complex, containing multiple copies of TatA, TatB and TatC subunits, and a separate TatA complex, containing only TatA subunits. Substrates initially bind to the TatABC complex, which probably triggers association of the separate TatA complex to form the active translocon.

It is found in the cell inner membrane. Part of the twin-arginine translocation (Tat) system that transports large folded proteins containing a characteristic twin-arginine motif in their signal peptide across membranes. Together with TatC, TatB is part of a receptor directly interacting with Tat signal peptides. TatB may form an oligomeric binding site that transiently accommodates folded Tat precursor proteins before their translocation. The polypeptide is Sec-independent protein translocase protein TatB (Helicobacter pylori (strain J99 / ATCC 700824) (Campylobacter pylori J99)).